The chain runs to 505 residues: Membrane-bound O-acyltransferase GUP1 (505 aa).

Over 1 to 217 (MFKAAMDASN…VAPIPLTDYN (217 aa)) the chain is Extracellular. A helical membrane pass occupies residues 218 to 238 (FVNYMAYITYAPLFIAGPIIT). Residues 239–266 (FNDYIYQSDYKAMSSVKDYKRTFIYFLR) lie on the Cytoplasmic side of the membrane. A helical transmembrane segment spans residues 267 to 287 (FAFCILVMEFLLHFMYVVAVS). Topologically, residues 288–296 (KTKAWEGDT) are extracellular. The chain crosses the membrane as a helical span at residues 297-317 (PFQLSMLGLFNLNIIWLKLLI). At 318-377 (PWRLFRLWSLIDGIDPPENMIRCMDNNFSTLAFWRAWHRSYNRWIIRYIYIPLGGGGKYR) the chain is on the cytoplasmic side. A run of 2 helical transmembrane segments spans residues 378–398 (ILNSLCVFSFVAIWHDIELKL) and 399–419 (LMWGWLVVIFIIPELAATAIF). The active site involves histidine 392. Residues 420–430 (KNYQHEPWYRH) are Cytoplasmic-facing. A helical transmembrane segment spans residues 431–451 (VCALGAVINIWMMMLANLFGF). Residues 452–464 (CMGKDGTMSLIKT) are Extracellular-facing. A helical transmembrane segment spans residues 465–485 (LFTTAVGLRFLFLSLGALFVG). Over 486 to 505 (SQVMFELREAEKRRGVNVKC) the chain is Cytoplasmic.

Belongs to the membrane-bound acyltransferase family.

It is found in the cell membrane. It localises to the endoplasmic reticulum membrane. The protein localises to the mitochondrion membrane. Functionally, membrane-bound O-acyltransferase involved in the remodeling of glycosylphosphatidylinositol (GPI) anchors. Acts only on GPI-anchored proteins, but not on free GPI lipids. Also involved in lipid metabolism, having profound effects on sphingolipid-sterol-ordered domains integrity and assembly. Involved in cell integrity and apoptosis. The protein is Membrane-bound O-acyltransferase GUP1 (GUP1) of Millerozyma farinosa (Yeast).